Here is a 989-residue protein sequence, read N- to C-terminus: Phosphoenolpyruvate carboxylase (989 aa).

Active-site residues include His175 and Lys630.

Belongs to the PEPCase type 1 family. Requires Mg(2+) as cofactor.

The enzyme catalyses oxaloacetate + phosphate = phosphoenolpyruvate + hydrogencarbonate. Forms oxaloacetate, a four-carbon dicarboxylic acid source for the tricarboxylic acid cycle. In Prochlorococcus marinus (strain MIT 9312), this protein is Phosphoenolpyruvate carboxylase.